The chain runs to 383 residues: GA-binding protein subunit beta-1 (383 aa).

Ser-2 bears the N-acetylserine mark. 2 ANK repeats span residues 5–34 (DLGK…PFTT) and 37–66 (LGTS…SRDA). Lys-69 is modified (N6-acetyllysine). ANK repeat units lie at residues 70–99 (VDRT…DVNA), 103–132 (LKMT…DVHT), and 136–166 (FCKT…QINT). An N6-acetyllysine mark is found at Lys-340 and Lys-369.

In terms of assembly, heterotetramer of two alpha and two beta subunits. Interacts with HCFC1, causing repression of transcriptional activity. Post-translationally, acetylated by EP300/p300. Deacetylated by SIRT7, promoting heterotetramerization and activity.

It localises to the nucleus. Its function is as follows. Transcription factor capable of interacting with purine rich repeats (GA repeats). Acts as a master regulator of nuclear-encoded mitochondrial genes. The chain is GA-binding protein subunit beta-1 (GABPB1) from Bos taurus (Bovine).